A 337-amino-acid polypeptide reads, in one-letter code: Glycerol-3-phosphate dehydrogenase [NAD(P)+] (337 aa).

NADPH is bound by residues Trp11, Arg30, and Lys113. Residues Lys113, Gly141, and Ser143 each contribute to the sn-glycerol 3-phosphate site. Ala145 is a binding site for NADPH. Sn-glycerol 3-phosphate is bound by residues Lys196, Asp249, Ser259, Arg260, and Asn261. Lys196 serves as the catalytic Proton acceptor. Position 260 (Arg260) interacts with NADPH. NADPH-binding residues include Val284 and Glu286.

It belongs to the NAD-dependent glycerol-3-phosphate dehydrogenase family.

It is found in the cytoplasm. It catalyses the reaction sn-glycerol 3-phosphate + NAD(+) = dihydroxyacetone phosphate + NADH + H(+). The enzyme catalyses sn-glycerol 3-phosphate + NADP(+) = dihydroxyacetone phosphate + NADPH + H(+). Its pathway is membrane lipid metabolism; glycerophospholipid metabolism. Its function is as follows. Catalyzes the reduction of the glycolytic intermediate dihydroxyacetone phosphate (DHAP) to sn-glycerol 3-phosphate (G3P), the key precursor for phospholipid synthesis. The polypeptide is Glycerol-3-phosphate dehydrogenase [NAD(P)+] (Leptothrix cholodnii (strain ATCC 51168 / LMG 8142 / SP-6) (Leptothrix discophora (strain SP-6))).